A 475-amino-acid polypeptide reads, in one-letter code: ATP synthase subunit beta, chloroplastic (475 aa).

156–163 lines the ATP pocket; it reads GGAGVGKT.

This sequence belongs to the ATPase alpha/beta chains family. F-type ATPases have 2 components, CF(1) - the catalytic core - and CF(0) - the membrane proton channel. CF(1) has five subunits: alpha(3), beta(3), gamma(1), delta(1), epsilon(1). CF(0) has four main subunits: a(1), b(1), b'(1) and c(9-12).

It is found in the plastid. It localises to the chloroplast thylakoid membrane. It carries out the reaction ATP + H2O + 4 H(+)(in) = ADP + phosphate + 5 H(+)(out). Functionally, produces ATP from ADP in the presence of a proton gradient across the membrane. The catalytic sites are hosted primarily by the beta subunits. The polypeptide is ATP synthase subunit beta, chloroplastic (Phaeodactylum tricornutum (strain CCAP 1055/1)).